The chain runs to 1199 residues: MALSEEPAAGAAEDPVEDPVEDAGEDAALACGAALESFGESAETRELLGHLPAVLADRSAREGALERFRVIMDKYQEQPHLLDPHLEWMLNLLLEFVQNKTSPADLVHLAFKFLYIISKVRGYKTFLRLFPHEVADVQPVLDMFTNQNPKDHETWETRYMLLLWLSVTCLIPFDFSRLDGNLSQPGQERASTMDRILQVAESYLVVSDKARDAAAVLVSKFVTRPDVKQKKMASFLDWSLCTLARSSFQTIEGVIAMDGTLQALAQIFKHGKREDCLPYAATVLQCLDSCRLPDSNQTLLRKLGVKLVQRLGLTFLKPQVAKWRYQRGCRSLAESLQHSIQNPREPVTQAETPDSDGQDDVPEEVESVIEQLLVGLKDKDTIVRWSAAKGIGRMAGRLPKELADDVTGSVLDCFSFQETDSAWHGGCLALAELGRRGLLLPSRLSDVVPVILRALTYEEKRGACSVGSNVRDAACYVCWAFARAYEPQELKPFVAAISSALVIATVFDRDVNCRRAASAAFQENVGRQGTFPHGIDILTTADYFAVGNRSNCFLVISMFIAGFPEYTQPMIEHLVTMKVGHWDGTIRELSAKALRNLAQRAPEHTAREVFPRLLSMTQSPDLHTRHGAVLACAEVARSLHTLATQQGRPVSDFLDEKAMHGLKQIHQQLYDRQLYRGLGGELMRQAVCILIENVALSKMPFRGDAVIDGWQWLINDTLKNLHLISSHSRQHIKEAAVSALAALCSEYHAQEPGEAEAAAQEELVKLYLAELQSPEEMTRCGCALALGALPAFFLKGRLRQVLAGLRAVTHISPKDVSFAEARRDALKAISRICQTVGVRAEGPPDEAVCRENVSQIYCTLLDCLKDYTTDSRGDVGAWVREAAMTSLMDLTLLLGRNQPELIEAPLCQQLMCCLAQQASEKIDRFRAHAARVFLALLHADSPAIPHVPARPELERLFPRAAVASVNWGAPSQAFPRMARLLGLPAYRYHVLLGLAVSVGGLTESTVRYSTQGLFEYMKEIQNDPAALEDFGGTLLQVFEDNLLNDRVSVPLLKTLDQMLANGCFDIFTAQENHPFCVKLLALCKEEIKKSKDVQKLRSSIAVFCGLVQFPGDVRRKVLLQLFLLLCHPFPVIRKNTASQVYEMVLTYDVVPTAVLDEVMAVLSSTAWDAELPVVRAQRNRLCDLLGVPRPQLVPKPAVR.

Disordered regions lie at residues 1–23 (MALSEEPAAGAAEDPVEDPVEDA) and 337–361 (QHSIQNPREPVTQAETPDSDGQDDV). The span at 14–23 (DPVEDPVEDA) shows a compositional bias: acidic residues. HEAT repeat units follow at residues 368–406 (VIEQLLVGLKDKDTIVRWSAAKGIGRMAGRLPKELADDV), 603–639 (EHTAREVFPRLLSMTQSPDLHTRHGAVLACAEVARSL), 757–793 (AAAQEELVKLYLAELQSPEEMTRCGCALALGALPAFF), and 1111–1147 (GDVRRKVLLQLFLLLCHPFPVIRKNTASQVYEMVLTY).

The protein belongs to the TBCD family. Found in a complex with at least ARL2, PPP2CB, PPP2R1A, PPP2R2A, PPP2R5E and TBCD. Interacts with PPP2CB. Part of a supercomplex made of cofactors A to E. Cofactors A and D function by capturing and stabilizing tubulin in a quasi-native conformation. Cofactor E binds to the cofactor D-tubulin complex; interaction with cofactor C then causes the release of tubulin polypeptides that are committed to the native state. Interacts with ARL2; interaction is enhanced with the GDP-bound form of ARL2. Does not interact with ARL3, ARL4A and ARL4D. Interacts with beta tubulin. Interacts with TBCE.

The protein localises to the cell junction. It localises to the tight junction. The protein resides in the lateral cell membrane. Its subcellular location is the cytoplasm. It is found in the adherens junction. The protein localises to the cytoskeleton. It localises to the microtubule organizing center. The protein resides in the centrosome. Functionally, tubulin-folding protein implicated in the first step of the tubulin folding pathway and required for tubulin complex assembly. Involved in the regulation of microtubule polymerization or depolymerization, it modulates microtubule dynamics by capturing GTP-bound beta-tubulin (TUBB). Its ability to interact with beta tubulin is regulated via its interaction with ARL2. Acts as a GTPase-activating protein (GAP) for ARL2. Induces microtubule disruption in absence of ARL2. Increases degradation of beta tubulin, when overexpressed in polarized cells. Promotes epithelial cell detachment, a process antagonized by ARL2. Induces tight adherens and tight junctions disassembly at the lateral cell membrane. Required for correct assembly and maintenance of the mitotic spindle, and proper progression of mitosis. Involved in neuron morphogenesis. In Bos taurus (Bovine), this protein is Tubulin-specific chaperone D (TBCD).